Here is a 382-residue protein sequence, read N- to C-terminus: MRKPINLLREFSVPLIAGVITALAWANLDPRGYDALIHQPSFGGVSLHFLVNELFMVLFFGIAAAEITQSCLPGGDLNPPRKAVNPLLATLGGVIGPVLVYLSLNAVIGDPTLTKGWGIPTATDIALAWLVARLVFGAGHPAVSFLLLLAVADDAIGLAIIAVFYPDPVHPTEPMWLFLTVAGIVAAYILRGARAKSYWPYVLVGGGLSWTGLFKAHLHPALALVFIIPFLPHPPRESAHLFEENPRDTSPLARFEHDWKIVVDFGLFLFGLANAGVRFSSVGTATWLVLTALLVGKTAGILTMGSLGKALGFPLPDRVGFKELALTGLVAGMGLTVALFVAGVAFVDPDIEGAAKMGALLSGGVLPVAVALGRILKVRRIP.

10 helical membrane-spanning segments follow: residues 5 to 25 (INLL…ALAW), 42 to 62 (FGGV…FFGI), 88 to 108 (LATL…NAVI), 116 to 136 (GWGI…RLVF), 145 to 165 (FLLL…AVFY), 169 to 189 (VHPT…AAYI), 261 to 281 (IVVD…RFSS), 282 to 302 (VGTA…AGIL), 327 to 347 (TGLV…VAFV), and 353 to 373 (GAAK…VALG).

The protein belongs to the NhaA Na(+)/H(+) (TC 2.A.33) antiporter family.

The protein resides in the cell inner membrane. The catalysed reaction is Na(+)(in) + 2 H(+)(out) = Na(+)(out) + 2 H(+)(in). Na(+)/H(+) antiporter that extrudes sodium in exchange for external protons. The sequence is that of Na(+)/H(+) antiporter NhaA from Geobacter metallireducens (strain ATCC 53774 / DSM 7210 / GS-15).